Consider the following 343-residue polypeptide: Tetraacyldisaccharide 4'-kinase (343 aa).

47–54 (SVGGTGKT) is an ATP binding site.

This sequence belongs to the LpxK family.

It catalyses the reaction a lipid A disaccharide + ATP = a lipid IVA + ADP + H(+). It participates in glycolipid biosynthesis; lipid IV(A) biosynthesis; lipid IV(A) from (3R)-3-hydroxytetradecanoyl-[acyl-carrier-protein] and UDP-N-acetyl-alpha-D-glucosamine: step 6/6. Transfers the gamma-phosphate of ATP to the 4'-position of a tetraacyldisaccharide 1-phosphate intermediate (termed DS-1-P) to form tetraacyldisaccharide 1,4'-bis-phosphate (lipid IVA). The protein is Tetraacyldisaccharide 4'-kinase of Flavobacterium psychrophilum (strain ATCC 49511 / DSM 21280 / CIP 103535 / JIP02/86).